Here is a 501-residue protein sequence, read N- to C-terminus: Glycoprotein 3-alpha-L-fucosyltransferase A (501 aa).

The Cytoplasmic portion of the chain corresponds to 1 to 39 (MGVFSNLRGPKIGLTHEELPVVANGSTSSSSSPSSFKRK). A helical; Signal-anchor for type II membrane protein transmembrane segment spans residues 40–60 (VSTFLPICVALVVIIEIGFLC). Residues 61–501 (RLDNASLVDT…PCPKFEVVFV (441 aa)) are Lumenal-facing. 4 N-linked (GlcNAc...) asparagine glycosylation sites follow: Asn-64, Asn-337, Asn-420, and Asn-481.

Belongs to the glycosyltransferase 10 family. The cofactor is Mg(2+). Requires Mn(2+) as cofactor. In terms of processing, glycosylation may be important for enzymatic activity.

The protein resides in the golgi apparatus. The protein localises to the golgi stack membrane. The enzyme catalyses N(4)-{beta-D-GlcNAc-(1-&gt;2)-alpha-D-Man-(1-&gt;3)-[beta-D-GlcNAc-(1-&gt;2)-alpha-D-Man-(1-&gt;6)]-beta-D-Man-(1-&gt;4)-beta-D-GlcNAc-(1-&gt;4)-beta-D-GlcNAc}-L-asparaginyl-[protein] + GDP-beta-L-fucose = N(4)-{beta-D-GlcNAc-(1-&gt;2)-alpha-D-Man-(1-&gt;3)-[beta-D-GlcNAc-(1-&gt;2)-alpha-D-Man-(1-&gt;6)]-beta-D-Man-(1-&gt;4)-beta-D-GlcNAc-(1-&gt;4)-[alpha-L-Fuc(1-&gt;3)]-beta-D-GlcNAc}-L-asparaginyl-[protein] + GDP + H(+). It participates in protein modification; protein glycosylation. Its activity is regulated as follows. Inhibited by Cu(2+) and Zn(2+). Involved in cell wall synthesis. Preferentially catalyzes the addition of fucose in alpha 1-3 linkage to the first GlcNAc residue next to the peptide chains in N-glycans. The polypeptide is Glycoprotein 3-alpha-L-fucosyltransferase A (FUT11) (Arabidopsis thaliana (Mouse-ear cress)).